A 189-amino-acid chain; its full sequence is Apolipophorin-3 (189 aa).

The signal sequence occupies residues 1-18 (MAAKFVVVLAACVALSHS). The propeptide occupies 19 to 23 (AMVRR).

The protein belongs to the insect apolipophorin-3 family. Equilibrium between a soluble monomer and a bound lipoprotein form. Apolipophorin-3 associates with lipophorin during lipid loading until each particle contains 9 or 14 molecules of apolipophorin-3. In terms of tissue distribution, hemolymph.

It is found in the secreted. Its function is as follows. Assists in the loading of diacylglycerol, generated from triacylglycerol stores in the fat body through the action of adipokinetic hormone, into lipophorin, the hemolymph lipoprotein. It increases the lipid carrying capacity of lipophorin by covering the expanding hydrophobic surface resulting from diacylglycerol uptake. It thus plays a critical role in the transport of lipids during flight in several species of insects. This is Apolipophorin-3 from Manduca sexta (Tobacco hawkmoth).